A 404-amino-acid chain; its full sequence is Cysteine desulfurase IscS (404 aa).

Pyridoxal 5'-phosphate-binding positions include 75 to 76 (AT), asparagine 155, glutamine 183, and 203 to 205 (SGH). Residue lysine 206 is modified to N6-(pyridoxal phosphate)lysine. Threonine 243 contacts pyridoxal 5'-phosphate. Cysteine 328 (cysteine persulfide intermediate) is an active-site residue. Cysteine 328 contacts [2Fe-2S] cluster.

Belongs to the class-V pyridoxal-phosphate-dependent aminotransferase family. NifS/IscS subfamily. Homodimer. Forms a heterotetramer with IscU, interacts with other sulfur acceptors. It depends on pyridoxal 5'-phosphate as a cofactor.

The protein localises to the cytoplasm. The enzyme catalyses (sulfur carrier)-H + L-cysteine = (sulfur carrier)-SH + L-alanine. It functions in the pathway cofactor biosynthesis; iron-sulfur cluster biosynthesis. Functionally, master enzyme that delivers sulfur to a number of partners involved in Fe-S cluster assembly, tRNA modification or cofactor biosynthesis. Catalyzes the removal of elemental sulfur and selenium atoms from cysteine and selenocysteine to produce alanine. Functions as a sulfur delivery protein for Fe-S cluster synthesis onto IscU, an Fe-S scaffold assembly protein, as well as other S acceptor proteins. Also functions as a selenium delivery protein in the pathway for the biosynthesis of selenophosphate. The chain is Cysteine desulfurase IscS from Escherichia coli (strain K12 / DH10B).